Reading from the N-terminus, the 384-residue chain is Potassium channel subfamily K member 18 (384 aa).

Over 1-23 (MEVSGHPQARRCCPEALGKLFPG) the chain is Cytoplasmic. A helical membrane pass occupies residues 24–44 (LCFLCFLVTYALVGAVVFSAI). A glycan (N-linked (GlcNAc...) asparagine) is linked at N70. An intramembrane region (pore-forming) is located at residues 103-129 (FLSSLFFCCTVFSTVGYGYIYPVTRLG). Residues T116, V117, G118, and Y119 each contribute to the K(+) site. A selectivity filter 1 region spans residues 116 to 121 (TVGYGY). Residues 130 to 148 (KYLCMLYALFGIPLMFLVL) traverse the membrane as a helical segment. The Cytoplasmic segment spans residues 149–280 (TDTGDILATI…EVGQQVERLD (132 aa)). An interaction with calcineurin region spans residues 200–205 (PQIIIS). Residues 249–254 (RSNSCP) form an interaction with YWHAH region. A phosphoserine mark is found at S252 and S264. A helical transmembrane segment spans residues 281-301 (IPLPIIALIVFAYISCAAAIL). An intramembrane region (pore-forming) is located at residues 314 to 328 (FYFCFVTLTTIGFGD). The interval 323 to 328 (TIGFGD) is selectivity filter 2. The chain crosses the membrane as a helical span at residues 335 to 355 (NFFLFFSIYIIVGMEIVFIAF). Residues 356-384 (KLVQNRLIDIYKNVMLFFAKGKFYHLVKK) are Cytoplasmic-facing.

This sequence belongs to the two pore domain potassium channel (TC 1.A.1.8) family. As to quaternary structure, homodimer. Heterodimer with KCNK2. Heterodimer with KCNK10. Interacts with calcineurin. Interacts with YWHAH, in a phosphorylation-dependent manner. Post-translationally, N-glycosylated. In terms of processing, phosphorylation of Ser-264 is required for the binding of 14-3-3eta/YWHAH. Calcineurin-mediated dephosphorylation enhances channel activity. Expressed in dorsal root ganglion and trigeminal ganglion neurons. Detected at low levels in spinal cord. Expressed in regulatory T cells (at protein level).

It is found in the cell membrane. It catalyses the reaction K(+)(in) = K(+)(out). With respect to regulation, activated by volatile anesthetics but inhibited by amide local anesthetics. Inhibited by Ba(2+) ions. Inhibited by free polyunsaturated fatty acids. Channel conductance is sensitive to intracellular pH, it decreases at acidic pH and increases at basic pH. In contrast to its mouse ortholog, it is not regulated by extracellular protons. Insensitive to changes in temperature. Its function is as follows. K(+) channel that conducts outward and inward rectifying currents at depolarized and hyperpolarized membrane potentials, respectively. The outward rectifying currents are voltage-dependent, coupled to K(+) electrochemical gradient across the membrane, whereas the inward currents can be induced in response to activation of Ca(2+)-mobilizing receptors. Homo- and heterodimerizes to form functional channels with distinct regulatory and gating properties. In trigeminal ganglia sensory neurons, the heterodimers of KCNK18/TRESK and KCNK2/TREK-1 or KCNK10/TREK-2 inhibit neuronal firing and neurogenic inflammation by stabilizing the resting membrane potential at K(+) equilibrium potential as well as by regulating the threshold of action potentials and the spike frequency. In thymocytes, conducts K(+) currents upon T cell receptor (TCR) signaling leading to sustained Ca(2+) influx and NF-kappa-B activation, FOXP3 transcription and positive selection of regulatory T cell (Treg) progenitor subsets. Appears to mediate the analgesics effects of hydroxy-alpha-sanshool, a metabolite naturally present in Schezuan pepper and other Xanthoxylum plants. The chain is Potassium channel subfamily K member 18 from Homo sapiens (Human).